The following is a 38-amino-acid chain: Large ribosomal subunit protein bL36 (38 aa).

It belongs to the bacterial ribosomal protein bL36 family.

The polypeptide is Large ribosomal subunit protein bL36 (Saccharophagus degradans (strain 2-40 / ATCC 43961 / DSM 17024)).